The chain runs to 89 residues: Small ribosomal subunit protein bS20 (89 aa).

Belongs to the bacterial ribosomal protein bS20 family.

In terms of biological role, binds directly to 16S ribosomal RNA. The protein is Small ribosomal subunit protein bS20 of Wolbachia pipientis wMel.